Consider the following 50-residue polypeptide: Protein HokA (50 aa).

The chain crosses the membrane as a helical span at residues 7-24 (LLSLIVICFTLLFFTWMI).

The protein belongs to the Hok/Gef family.

It is found in the cell inner membrane. Its function is as follows. Toxic component of a type I toxin-antitoxin (TA) system. When overexpressed kills cells within minutes; causes collapse of the transmembrane potential and arrest of respiration. Its toxic effect is probably neutralized by antisense antitoxin RNA SokA. This Escherichia coli (strain K12) protein is Protein HokA.